Reading from the N-terminus, the 100-residue chain is Large ribosomal subunit protein uL23 (100 aa).

It belongs to the universal ribosomal protein uL23 family. Part of the 50S ribosomal subunit. Contacts protein L29, and trigger factor when it is bound to the ribosome.

One of the early assembly proteins it binds 23S rRNA. One of the proteins that surrounds the polypeptide exit tunnel on the outside of the ribosome. Forms the main docking site for trigger factor binding to the ribosome. The polypeptide is Large ribosomal subunit protein uL23 (Thermosynechococcus vestitus (strain NIES-2133 / IAM M-273 / BP-1)).